The primary structure comprises 178 residues: Probetacellulin (178 aa).

The signal sequence occupies residues 1–31 (MDRAARCSGASSLPLLLALALGLVILHCVVA). Over 32 to 118 (DGNSTRSPET…LFYLRGDRGQ (87 aa)) the chain is Extracellular. Residue asparagine 34 is glycosylated (N-linked (GlcNAc...) asparagine). The EGF-like domain occupies 65 to 105 (HFSRCPKQYKHYCIKGRCRFVVAEQTPSCVCDEGYIGARCE). Disulfide bonds link cysteine 69-cysteine 82, cysteine 77-cysteine 93, and cysteine 95-cysteine 104. A propeptide spans 112–178 (LRGDRGQILV…NEDIEETNIA (67 aa)) (removed in mature form). Residues 119-139 (ILVICLIAVMVVFIILVIGVC) form a helical membrane-spanning segment. Residues 140-178 (TCCHPLRKRRKRKKKEEEMETLGKDITPINEDIEETNIA) lie on the Cytoplasmic side of the membrane.

In terms of assembly, monomer. Interacts with EGFR and ERBB4. Synthesized in several tissues and tumor cells. Predominantly expressed in pancreas and small intestine.

Its subcellular location is the secreted. The protein resides in the extracellular space. The protein localises to the cell membrane. Growth factor that binds to EGFR, ERBB4 and other EGF receptor family members. Potent mitogen for retinal pigment epithelial cells and vascular smooth muscle cells. The protein is Probetacellulin (BTC) of Homo sapiens (Human).